The primary structure comprises 171 residues: Ribosome maturation factor RimM (171 aa).

In terms of domain architecture, PRC barrel spans 97–170; it reads EGEYYYHEVI…QVTIHVMEGL (74 aa).

It belongs to the RimM family. As to quaternary structure, binds ribosomal protein uS19.

It localises to the cytoplasm. An accessory protein needed during the final step in the assembly of 30S ribosomal subunit, possibly for assembly of the head region. Essential for efficient processing of 16S rRNA. May be needed both before and after RbfA during the maturation of 16S rRNA. It has affinity for free ribosomal 30S subunits but not for 70S ribosomes. This is Ribosome maturation factor RimM from Bacillus cytotoxicus (strain DSM 22905 / CIP 110041 / 391-98 / NVH 391-98).